The chain runs to 76 residues: Conotoxin PnMKLT1-1111 (76 aa).

The first 22 residues, 1–22 (MKLTCMMIVAVLFLTAWTVVTA), serve as a signal peptide directing secretion. Residues 23–50 (VPHSNKRLANLYLKARHEMKNPEASNVD) constitute a propeptide that is removed on maturation. Disulfide bonds link Cys-53-Cys-67, Cys-60-Cys-71, and Cys-66-Cys-75.

This sequence belongs to the conotoxin O1 superfamily. As to expression, expressed by the venom duct.

Its subcellular location is the secreted. This Conus pennaceus (Feathered cone) protein is Conotoxin PnMKLT1-1111.